We begin with the raw amino-acid sequence, 276 residues long: Ribosomal RNA small subunit methyltransferase A (276 aa).

Residues His15, Leu17, Gly42, Glu64, Asp89, and Asn108 each contribute to the S-adenosyl-L-methionine site.

This sequence belongs to the class I-like SAM-binding methyltransferase superfamily. rRNA adenine N(6)-methyltransferase family. RsmA subfamily.

The protein localises to the cytoplasm. It catalyses the reaction adenosine(1518)/adenosine(1519) in 16S rRNA + 4 S-adenosyl-L-methionine = N(6)-dimethyladenosine(1518)/N(6)-dimethyladenosine(1519) in 16S rRNA + 4 S-adenosyl-L-homocysteine + 4 H(+). Functionally, specifically dimethylates two adjacent adenosines (A1518 and A1519) in the loop of a conserved hairpin near the 3'-end of 16S rRNA in the 30S particle. May play a critical role in biogenesis of 30S subunits. The chain is Ribosomal RNA small subunit methyltransferase A from Prochlorococcus marinus (strain MIT 9515).